The chain runs to 490 residues: Cytochrome P450 90D2 (490 aa).

A helical membrane pass occupies residues 4-24 (AAAGWAAPAFAVAAVVIWVVL). Cysteine 437 is a binding site for heme.

Belongs to the cytochrome P450 family. Requires heme as cofactor.

It localises to the membrane. The enzyme catalyses 6-deoxoteasterone + reduced [NADPH--hemoprotein reductase] + O2 = 3-dehydro-6-deoxoteasterone + oxidized [NADPH--hemoprotein reductase] + 2 H2O + H(+). The protein operates within plant hormone biosynthesis; brassinosteroid biosynthesis. Its function is as follows. Catalyzes the C6-oxidation step in brassinosteroids biosynthesis. May convert 6-deoxoteasterone (6-deoxoTE) to 3-dehydro-6-deoxoteasterone (6-deoxo3DT, 6-deoxo3DHT), and teasterone (TE) to 3-dehydroteasterone (3DT, 3-DHT). Involved in the elongation of leaf sheaths and stems. In Oryza sativa subsp. indica (Rice), this protein is Cytochrome P450 90D2.